Here is a 443-residue protein sequence, read N- to C-terminus: Trihelix transcription factor ASIL2 (443 aa).

The disordered stretch occupies residues 1 to 82 (MEDDEDIRSQ…RPTGGGGRED (82 aa)). The segment covering 38–48 (YSLTPPGNSSQ) has biased composition (polar residues). A compositionally biased stretch (gly residues) spans 64-78 (SGGGNNSSGRPTGGG). The region spanning 84-144 (WSEAATAVLI…QCKNRIDTVK (61 aa)) is the Myb-like domain. Disordered stretches follow at residues 238-350 (FGGS…GNKW) and 413-443 (RRMG…LGNN). Residues 239–249 (GGSGGGGGGGS) are compositionally biased toward gly residues. A compositionally biased stretch (low complexity) spans 271-286 (TLPQQGRTLPQQQQQG). A Bipartite nuclear localization signal motif is present at residues 290–303 (KRCSESKRWRFRKR). Basic and acidic residues predominate over residues 333-350 (MKTEEKKKQDGDGVGNKW). Residues 360–414 (FGEAYEQTENAKLQQVVEMEKERMKFLKELELQRMQFFVKTQLEISQLKQQHGRR) adopt a coiled-coil conformation. Over residues 428–443 (NNINAIVNNNNDLGNN) the composition is skewed to low complexity.

The protein resides in the nucleus. Transcription regulator that may repress the maturation program during early embryogenesis. The sequence is that of Trihelix transcription factor ASIL2 from Arabidopsis thaliana (Mouse-ear cress).